The chain runs to 354 residues: Fructose-bisphosphate aldolase (354 aa).

Ser-61 is a D-glyceraldehyde 3-phosphate binding site. Asp-104 (proton donor) is an active-site residue. His-105, Asp-139, Glu-169, and His-221 together coordinate Zn(2+). Residue Gly-222 participates in dihydroxyacetone phosphate binding. Zn(2+) is bound at residue His-260. Residues 261-263 (GGS) and 282-285 (NIDT) contribute to the dihydroxyacetone phosphate site.

It belongs to the class II fructose-bisphosphate aldolase family. In terms of assembly, homodimer. Zn(2+) is required as a cofactor.

The enzyme catalyses beta-D-fructose 1,6-bisphosphate = D-glyceraldehyde 3-phosphate + dihydroxyacetone phosphate. Its pathway is carbohydrate degradation; glycolysis; D-glyceraldehyde 3-phosphate and glycerone phosphate from D-glucose: step 4/4. In terms of biological role, catalyzes the aldol condensation of dihydroxyacetone phosphate (DHAP or glycerone-phosphate) with glyceraldehyde 3-phosphate (G3P) to form fructose 1,6-bisphosphate (FBP) in gluconeogenesis and the reverse reaction in glycolysis. In Campylobacter jejuni subsp. jejuni serotype O:23/36 (strain 81-176), this protein is Fructose-bisphosphate aldolase (fba).